The sequence spans 680 residues: uncharacterized protein (680 aa).

The protein belongs to the HyuA family.

This is an uncharacterized protein from Methanocaldococcus jannaschii (strain ATCC 43067 / DSM 2661 / JAL-1 / JCM 10045 / NBRC 100440) (Methanococcus jannaschii).